The following is a 597-amino-acid chain: Uptake hydrogenase large subunit (597 aa).

Ni(2+) contacts are provided by C75, C78, C576, and C579.

It belongs to the [NiFe]/[NiFeSe] hydrogenase large subunit family. As to quaternary structure, heterodimer of a large and a small subunit. Ni(2+) serves as cofactor.

It localises to the cell membrane. The catalysed reaction is H2 + A = AH2. This enzyme recycles the H(2) produced by nitrogenase to increase the production of ATP and to protect nitrogenase against inhibition or damage by O(2) under carbon- or phosphate-limited conditions. The chain is Uptake hydrogenase large subunit (hupB) from Rhodobacter capsulatus (Rhodopseudomonas capsulata).